Consider the following 45-residue polypeptide: Cytochrome b559 subunit beta (45 aa).

Thr2 is modified (N-acetylthreonine). Topologically, residues 2–17 (TSNTPNQEPVSYPIFT) are cytoplasmic. A helical transmembrane segment spans residues 18-42 (VRWVAVHTLAVPTIFFLGAIAAMQF). Residue His24 participates in heme binding. The Lumenal segment spans residues 43–45 (IQR).

As to quaternary structure, heterodimer of an alpha subunit and a beta subunit. PSII is composed of 1 copy each of membrane proteins PsbA, PsbB, PsbC, PsbD, PsbE, PsbF, PsbH, PsbI, PsbJ, PsbK, PsbL, PsbM, PsbT, PsbX, PsbY, PsbZ, Psb30/Ycf12, peripheral proteins PsbO, CyanoQ (PsbQ), PsbU, PsbV and a large number of cofactors. It forms dimeric complexes. Part of a photosystem II (PSII) assembly intermediate complex PSII-I; crystallized from a strain deleted of psbJ, it forms monomeric PSII before addition of the oxygen evolving complex. PSII-I includes 3 assembly factors not found in mature PSII (Psb27, Psb28 and Psb34). Heme b serves as cofactor.

The protein resides in the cellular thylakoid membrane. Functionally, this b-type cytochrome is tightly associated with the reaction center of photosystem II (PSII). PSII is a light-driven water:plastoquinone oxidoreductase that uses light energy to abstract electrons from H(2)O, generating O(2) and a proton gradient subsequently used for ATP formation. It consists of a core antenna complex that captures photons, and an electron transfer chain that converts photonic excitation into a charge separation. This Thermosynechococcus vestitus (strain NIES-2133 / IAM M-273 / BP-1) protein is Cytochrome b559 subunit beta.